The chain runs to 319 residues: Aspartate carbamoyltransferase catalytic subunit (319 aa).

Carbamoyl phosphate-binding residues include R65 and T66. L-aspartate is bound at residue K93. Residues R115, H149, and Q152 each coordinate carbamoyl phosphate. Residues R182 and R237 each coordinate L-aspartate. Residues G278 and P279 each contribute to the carbamoyl phosphate site.

It belongs to the aspartate/ornithine carbamoyltransferase superfamily. ATCase family. In terms of assembly, heterododecamer (2C3:3R2) of six catalytic PyrB chains organized as two trimers (C3), and six regulatory PyrI chains organized as three dimers (R2).

The enzyme catalyses carbamoyl phosphate + L-aspartate = N-carbamoyl-L-aspartate + phosphate + H(+). It participates in pyrimidine metabolism; UMP biosynthesis via de novo pathway; (S)-dihydroorotate from bicarbonate: step 2/3. Catalyzes the condensation of carbamoyl phosphate and aspartate to form carbamoyl aspartate and inorganic phosphate, the committed step in the de novo pyrimidine nucleotide biosynthesis pathway. This is Aspartate carbamoyltransferase catalytic subunit from Azoarcus sp. (strain BH72).